The chain runs to 50 residues: uncharacterized protein (50 aa).

The segment at 1–50 (MKTGFWQQVLPKRAGRRKEHPVQYMPHKKEENATGLMNPSLHTSHSAILK) is disordered. The segment covering 35-50 (GLMNPSLHTSHSAILK) has biased composition (polar residues).

This is an uncharacterized protein from Treponema pallidum (strain Nichols).